The chain runs to 464 residues: Histidine--tRNA ligase (464 aa).

The protein belongs to the class-II aminoacyl-tRNA synthetase family. Homodimer.

The protein resides in the cytoplasm. It catalyses the reaction tRNA(His) + L-histidine + ATP = L-histidyl-tRNA(His) + AMP + diphosphate + H(+). This is Histidine--tRNA ligase from Stenotrophomonas maltophilia (strain K279a).